Here is a 166-residue protein sequence, read N- to C-terminus: Large ribosomal subunit protein uL10 (166 aa).

The protein belongs to the universal ribosomal protein uL10 family. Part of the ribosomal stalk of the 50S ribosomal subunit. The N-terminus interacts with L11 and the large rRNA to form the base of the stalk. The C-terminus forms an elongated spine to which L12 dimers bind in a sequential fashion forming a multimeric L10(L12)X complex.

In terms of biological role, forms part of the ribosomal stalk, playing a central role in the interaction of the ribosome with GTP-bound translation factors. This chain is Large ribosomal subunit protein uL10, found in Aromatoleum aromaticum (strain DSM 19018 / LMG 30748 / EbN1) (Azoarcus sp. (strain EbN1)).